Consider the following 224-residue polypeptide: Large ribosomal subunit protein uL4 (224 aa).

Residues 53-74 (RNRSEVSHSTKKPFKQKGTGNA) are disordered.

Belongs to the universal ribosomal protein uL4 family. In terms of assembly, part of the 50S ribosomal subunit.

Functionally, one of the primary rRNA binding proteins, this protein initially binds near the 5'-end of the 23S rRNA. It is important during the early stages of 50S assembly. It makes multiple contacts with different domains of the 23S rRNA in the assembled 50S subunit and ribosome. Its function is as follows. Forms part of the polypeptide exit tunnel. This Chlamydia pneumoniae (Chlamydophila pneumoniae) protein is Large ribosomal subunit protein uL4.